Consider the following 532-residue polypeptide: Zinc metalloproteinase nas-29 (532 aa).

Positions 1–22 are cleaved as a signal peptide; that stretch reads MISKNTSFCGFLILVLATCMSA. N-linked (GlcNAc...) asparagine glycans are attached at residues Asn5, Asn27, Asn70, and Asn106. The propeptide occupies 23–134; sequence QFVSNESIKL…NGESTDRTKR (112 aa). The Peptidase M12A domain maps to 135–335; it reads QAYLDNNYPA…HIMNQHYQCQ (201 aa). 6 disulfide bridges follow: Cys179–Cys334, Cys201–Cys222, Cys338–Cys358, Cys360–Cys369, Cys380–Cys408, and Cys435–Cys456. His230 serves as a coordination point for Zn(2+). Glu231 is an active-site residue. Residues His234 and His240 each coordinate Zn(2+). One can recognise an EGF-like domain in the interval 330–370; that stretch reads QHYQCQEKCPTQAPCQNGGFTNSRNCKVCKCPTGFGGAYCQ. The CUB domain occupies 380-494; that stretch reads CGGYLNAEET…VSFEYSFVST (115 aa). N-linked (GlcNAc...) asparagine glycosylation occurs at Asn503.

Zn(2+) is required as a cofactor.

The protein localises to the secreted. Metalloprotease. The protein is Zinc metalloproteinase nas-29 (nas-29) of Caenorhabditis elegans.